Reading from the N-terminus, the 509-residue chain is Bifunctional purine biosynthesis protein PurH (509 aa).

The MGS-like domain occupies 1-144 (MKRALISVSD…KNYAAVTVVV (144 aa)).

The protein belongs to the PurH family.

It carries out the reaction (6R)-10-formyltetrahydrofolate + 5-amino-1-(5-phospho-beta-D-ribosyl)imidazole-4-carboxamide = 5-formamido-1-(5-phospho-D-ribosyl)imidazole-4-carboxamide + (6S)-5,6,7,8-tetrahydrofolate. It catalyses the reaction IMP + H2O = 5-formamido-1-(5-phospho-D-ribosyl)imidazole-4-carboxamide. Its pathway is purine metabolism; IMP biosynthesis via de novo pathway; 5-formamido-1-(5-phospho-D-ribosyl)imidazole-4-carboxamide from 5-amino-1-(5-phospho-D-ribosyl)imidazole-4-carboxamide (10-formyl THF route): step 1/1. It functions in the pathway purine metabolism; IMP biosynthesis via de novo pathway; IMP from 5-formamido-1-(5-phospho-D-ribosyl)imidazole-4-carboxamide: step 1/1. This Listeria monocytogenes serovar 1/2a (strain ATCC BAA-679 / EGD-e) protein is Bifunctional purine biosynthesis protein PurH.